The sequence spans 298 residues: Acetyl-coenzyme A carboxylase carboxyl transferase subunit beta (298 aa).

One can recognise a CoA carboxyltransferase N-terminal domain in the interval 41–298 (PTIECPECHA…RIVSKLMNLP (258 aa)). Zn(2+) contacts are provided by Cys45, Cys48, Cys64, and Cys67. A C4-type zinc finger spans residues 45-67 (CPECHALVTRTAIAFNAYVCPSC).

Belongs to the AccD/PCCB family. In terms of assembly, acetyl-CoA carboxylase is a heterohexamer composed of biotin carboxyl carrier protein (AccB), biotin carboxylase (AccC) and two subunits each of ACCase subunit alpha (AccA) and ACCase subunit beta (AccD). Zn(2+) is required as a cofactor.

It localises to the cytoplasm. The enzyme catalyses N(6)-carboxybiotinyl-L-lysyl-[protein] + acetyl-CoA = N(6)-biotinyl-L-lysyl-[protein] + malonyl-CoA. It functions in the pathway lipid metabolism; malonyl-CoA biosynthesis; malonyl-CoA from acetyl-CoA: step 1/1. Component of the acetyl coenzyme A carboxylase (ACC) complex. Biotin carboxylase (BC) catalyzes the carboxylation of biotin on its carrier protein (BCCP) and then the CO(2) group is transferred by the transcarboxylase to acetyl-CoA to form malonyl-CoA. This is Acetyl-coenzyme A carboxylase carboxyl transferase subunit beta from Acinetobacter baylyi (strain ATCC 33305 / BD413 / ADP1).